The chain runs to 291 residues: START domain-containing protein 10 (291 aa).

Met-1 carries the N-acetylmethionine modification. The disordered stretch occupies residues 1–23 (MEKPAASTEPQGSRPALGRESVQ). One can recognise an START domain in the interval 14–224 (RPALGRESVQ…MYKACIKYPE (211 aa)). N6-succinyllysine is present on residues Lys-94, Lys-197, and Lys-202. A phosphoserine mark is found at Ser-253, Ser-259, Ser-284, and Ser-289. Residues 260–291 (LENIDESAVTESREERAGGAGGEGSDDDTSLT) are disordered.

Post-translationally, phosphorylation at Ser-284 by CK2 negatively regulates lipid transfer activity, possibly by decreasing membrane association. As to expression, testis, kidney, liver, and intestine with the highest level in the testis.

The protein localises to the cell projection. It is found in the cilium. Its subcellular location is the flagellum. It localises to the cytoplasm. The protein resides in the membrane. Phospholipid transfer protein that preferentially selects lipid species containing a palmitoyl or stearoyl chain on the sn-1 and an unsaturated fatty acyl chain (18:1 or 18:2) on the sn-2 position. Able to transfer phosphatidylcholine (PC) and phosphatidyetanolamline (PE) between membranes. May play metabolic roles in sperm maturation or fertilization. In Mus musculus (Mouse), this protein is START domain-containing protein 10 (Stard10).